Here is a 136-residue protein sequence, read N- to C-terminus: Large ribosomal subunit protein uL16c (136 aa).

Positions 1–20 (MLSPKRTRFRKQHRGRMKGK) are disordered.

Belongs to the universal ribosomal protein uL16 family. In terms of assembly, part of the 50S ribosomal subunit.

Its subcellular location is the plastid. The protein resides in the chloroplast. The sequence is that of Large ribosomal subunit protein uL16c from Triticum aestivum (Wheat).